A 335-amino-acid chain; its full sequence is DNA-directed RNA polymerase subunit alpha (335 aa).

The segment at 1–233 is alpha N-terminal domain (alpha-NTD); sequence MTRTANEFLT…QQIAIFVDLQ (233 aa). Positions 247 to 335 are alpha C-terminal domain (alpha-CTD); the sequence is VDPILLRPVD…MDDRFAYRSR (89 aa).

The protein belongs to the RNA polymerase alpha chain family. In terms of assembly, homodimer. The RNAP catalytic core consists of 2 alpha, 1 beta, 1 beta' and 1 omega subunit. When a sigma factor is associated with the core the holoenzyme is formed, which can initiate transcription.

It carries out the reaction RNA(n) + a ribonucleoside 5'-triphosphate = RNA(n+1) + diphosphate. In terms of biological role, DNA-dependent RNA polymerase catalyzes the transcription of DNA into RNA using the four ribonucleoside triphosphates as substrates. The sequence is that of DNA-directed RNA polymerase subunit alpha from Acinetobacter baylyi (strain ATCC 33305 / BD413 / ADP1).